The sequence spans 206 residues: MPIGVPRVVFRNPGDPISSWVDIYNRLYRERLLFLGQGIGTELSNQLIGLMLYLSMEDENKDLYLFVNSPGGWVIPGIAIYDTMQFVRPDIHTICLGLAASMGSFILAGGQLTKRIAFPHARVMIHEPYSGFYMAQVGEFVLEAIEMAKLRETLTRVYAEKTGQPVWVIHEDMERDIFMSATEAQAYGIVDFVAVQGKEHGFHADL.

Ser-101 (nucleophile) is an active-site residue. The active site involves His-126.

The protein belongs to the peptidase S14 family. In terms of assembly, component of the chloroplastic Clp protease core complex.

It is found in the plastid. Its subcellular location is the chloroplast stroma. The catalysed reaction is Hydrolysis of proteins to small peptides in the presence of ATP and magnesium. alpha-casein is the usual test substrate. In the absence of ATP, only oligopeptides shorter than five residues are hydrolyzed (such as succinyl-Leu-Tyr-|-NHMec, and Leu-Tyr-Leu-|-Tyr-Trp, in which cleavage of the -Tyr-|-Leu- and -Tyr-|-Trp bonds also occurs).. Functionally, cleaves peptides in various proteins in a process that requires ATP hydrolysis. Has a chymotrypsin-like activity. Plays a major role in the degradation of misfolded proteins. The sequence is that of ATP-dependent Clp protease proteolytic subunit from Solanum lycopersicum (Tomato).